The following is a 930-amino-acid chain: Endoplasmic reticulum aminopeptidase 1 (930 aa).

At 1–2 the chain is on the cytoplasmic side; it reads MP. Residues 3–23 form a helical; Signal-anchor for type II membrane protein membrane-spanning segment; the sequence is SLLSLVLTFLAVSSPSCCQNS. Residues 24-930 are Lumenal-facing; the sequence is DTASPKASNG…WLQKERQELL (907 aa). 2 N-linked (GlcNAc...) asparagine glycosylation sites follow: Asn59 and Asn143. Residues Glu172 and 306-310 each bind substrate; that span reads GAMEN. His342 provides a ligand contact to Zn(2+). The Proton acceptor role is filled by Glu343. Residues His346 and Glu365 each coordinate Zn(2+). Cysteines 393 and 432 form a disulfide. N-linked (GlcNAc...) asparagine glycans are attached at residues Asn403 and Asn655. An intrachain disulfide couples Cys725 to Cys732. Asn749 and Asn890 each carry an N-linked (GlcNAc...) asparagine glycan.

It belongs to the peptidase M1 family. Monomer. May also exist as a heterodimer; with ERAP2. Interacts with RBMX. Zn(2+) is required as a cofactor. In terms of processing, N-glycosylated. Ubiquitous.

It localises to the endoplasmic reticulum membrane. In terms of biological role, aminopeptidase that plays a central role in peptide trimming, a step required for the generation of most HLA class I-binding peptides. Peptide trimming is essential to customize longer precursor peptides to fit them to the correct length required for presentation on MHC class I molecules. Strongly prefers substrates 9-16 residues long. Rapidly degrades 13-mer to a 9-mer and then stops. Preferentially hydrolyzes the residue Leu and peptides with a hydrophobic C-terminus, while it has weak activity toward peptides with charged C-terminus. May play a role in the inactivation of peptide hormones. May be involved in the regulation of blood pressure through the inactivation of angiotensin II and/or the generation of bradykinin in the kidney. This chain is Endoplasmic reticulum aminopeptidase 1 (Erap1), found in Rattus norvegicus (Rat).